Consider the following 101-residue polypeptide: Small ribosomal subunit protein uS14 (101 aa).

The interval R53–G72 is disordered. The segment covering R61–P70 has biased composition (basic and acidic residues).

This sequence belongs to the universal ribosomal protein uS14 family. As to quaternary structure, part of the 30S ribosomal subunit. Contacts proteins S3 and S10.

Binds 16S rRNA, required for the assembly of 30S particles and may also be responsible for determining the conformation of the 16S rRNA at the A site. The polypeptide is Small ribosomal subunit protein uS14 (Corynebacterium glutamicum (strain R)).